A 107-amino-acid chain; its full sequence is Essential MCU regulator, mitochondrial (107 aa).

Residues Met1–Arg52 constitute a mitochondrion transit peptide. Positions Met1–Arg52 are interaction with MAIP1. The Mitochondrial matrix segment spans residues Gly54–Phe65. A helical membrane pass occupies residues Gly66–Ser85. A GXXXX[G/A/S] motif is present at residues Gly81 to Ser85. Residues Lys86–Asp107 lie on the Mitochondrial intermembrane side of the membrane.

Belongs to the SMDT1/EMRE family. In terms of assembly, component of the uniplex complex, composed of MCU, EMRE/SMDT1, MICU1 and MICU2 (or MICU3) in a 4:4:1:1 stoichiometry. The number of EMRE/SMDT1 molecules is hovewer variable, ranging from 1 to 4 copies per uniplex complex, leading to uniplex complexes with distinct gatekeeping profiles. Interacts (via its C-terminal poly-Asp tail) with MCUR1; the interaction is direct. Unprocessed form interacts (via transit peptide) with MAIP1. Undergoes proteolytic degradation in neurons: degraded by AFG3L2 and SPG7 before SMDT1/EMRE assembly with the uniporter complex, limiting the availability of SMDT1/EMRE for MCU assembly and promoting efficient assembly of gatekeeper subunits with MCU.

Its subcellular location is the mitochondrion inner membrane. In terms of biological role, essential regulatory subunit of the mitochondrial calcium uniporter complex (uniplex), a complex that mediates calcium uptake into mitochondria. Required to bridge the calcium-sensing proteins MICU1 with the calcium-conducting subunit MCU. Acts by mediating activation of MCU and retention of MICU1 to the MCU pore, in order to ensure tight regulation of the uniplex complex and appropriate responses to intracellular calcium signaling. The protein is Essential MCU regulator, mitochondrial of Homo sapiens (Human).